A 96-amino-acid polypeptide reads, in one-letter code: Myticin-B (96 aa).

Positions 1-20 are cleaved as a signal peptide; it reads MKATMLLAVVVAVFVAGTEA. A propeptide spans 61 to 96 (removed in mature form); the sequence is VKFPFGATQDAKSMNELEYTPIMKSMENLDNGMDML.

Post-translationally, contains four disulfide bonds. Hemocytes.

It localises to the secreted. Functionally, bacteriolytic activity against Gram-positive bacteria M.luteus, B.megaterium and A.viridans and Gram-negative bacteria E.coli D31. Possesses antifungal activity against F.oxysporum. In Mytilus galloprovincialis (Mediterranean mussel), this protein is Myticin-B.